The following is a 148-amino-acid chain: MRLPVLPVHMKYPLFDVSVGQPTVTGEVTQSLRHDRPQFRRHHHAEHASQADGLGHGAAARNSFHHDGGRHGHATRIHENNRRPHKRNRRRHLRKGHLKAHRAESHLYGYLLRNQKACGEKLKICLPASKHPRFQVVLHPRCNKKQPT.

Residues 38 to 99 (QFRRHHHAEH…RRHLRKGHLK (62 aa)) form a disordered region. A compositionally biased stretch (basic and acidic residues) spans 64–82 (FHHDGGRHGHATRIHENNR). Residues 83–99 (RPHKRNRRRHLRKGHLK) are compositionally biased toward basic residues.

This is an uncharacterized protein from Fowl adenovirus A serotype 1 (strain CELO / Phelps) (FAdV-1).